Consider the following 206-residue polypeptide: MTFEWWFAYLLTSTLLSLSPGSGAINTMTTSINHGYRGAAASIAGLQTGLGIHIVLVGVGLGTLFSRSLIAFEILKWAGAAYLIWLGIQQWRAAGAIDLHTLAQTQSRGRLFKRAIFVNLTNPKSIVFLAALFPQFIMPQQPQLAQYLILGVTTIVVDMIVMTGYATLAQRIAAWIKGPKQMKALNKAFGSLFMLVGALLASARHA.

6 helical membrane-spanning segments follow: residues Trp-5–Ile-25, Gly-45–Phe-65, Ser-68–Ile-88, Phe-117–Ile-137, Leu-148–Leu-168, and Met-182–Ser-202.

The protein belongs to the Rht family.

It localises to the cell membrane. In terms of biological role, conducts the efflux of homoserine and homoserine lactone. This chain is Homoserine/homoserine lactone efflux protein (rhtB), found in Salmonella typhi.